Consider the following 498-residue polypeptide: ADP,ATP carrier protein 1 (498 aa).

Topologically, residues 1-33 (MSTSKSENYLSELRKIIWPIEQYENKKFLPLAF) are cytoplasmic. The helical transmembrane segment at 34 to 54 (MMFCILLNYSTLRSIKDGFVV) threads the bilayer. A disulfide bridge connects residues Cys37 and Cys85. Over 55–67 (TDIGTESISFLKT) the chain is Extracellular. A helical transmembrane segment spans residues 68-88 (YIVLPSAVIAMIIYVKLCDIL). The Cytoplasmic segment spans residues 89 to 92 (KQEN). Residues 93-113 (VFYVITSFFLGYFALFAFVLY) traverse the membrane as a helical segment. Residues 114–147 (PYPDLVHPDHKTIESLSLAYPNFKWFIKIVGKWS) lie on the Extracellular side of the membrane. A helical membrane pass occupies residues 148–168 (FASFYTIAELWGTMMLSLLFW). Residues 169 to 184 (QFANQITKIAEAKRFY) are Cytoplasmic-facing. Residues 185–205 (SMFGLLANLALPVTSVVIGYF) form a helical membrane-spanning segment. At 206–218 (LHEKTQIVAEHLK) the chain is on the extracellular side. The chain crosses the membrane as a helical span at residues 219 to 239 (FVPLFVIMITSSFLIILTYRW). The Cytoplasmic segment spans residues 240-279 (MNKNVLTDPRLYDPALVKEKKTKAKLSFIESLKMIFTSKY). A helical membrane pass occupies residues 280-300 (VGYIALLIIAYGVSVNLVEGV). The Extracellular segment spans residues 301–320 (WKSKVKELYPTKEAYTIYMG). Residues 321–341 (QFQFYQGWVAIAFMLIGSNIL) form a helical membrane-spanning segment. The Cytoplasmic portion of the chain corresponds to 342–348 (RKVSWLT). The helical transmembrane segment at 349–369 (AAMITPLMMFITGAAFFSFIF) threads the bilayer. At 370–379 (FDSVIAMNLT) the chain is on the extracellular side. The chain crosses the membrane as a helical span at residues 380–400 (GILASSPLTLAVMIGMIQNVL). Topologically, residues 401–438 (SKGVKYSLFDATKNMAYIPLDKDLRVKGQAAVEVIGGR) are cytoplasmic. 436–442 (GGRLGKS) contributes to the ATP binding site. A helical membrane pass occupies residues 439–459 (LGKSGGAIIQSTFFILFPVFG). Residues 460-465 (FIEATP) lie on the Extracellular side of the membrane. Residues 466-486 (YFASIFFIIVILWIFAVKGLN) form a helical membrane-spanning segment. Residues 487–498 (KEYQVLVNKNEK) lie on the Cytoplasmic side of the membrane.

This sequence belongs to the ADP/ATP translocase tlc family.

The protein resides in the cell membrane. Functionally, provides the rickettsial cell with host ATP in exchange for rickettsial ADP. This is an obligate exchange system. This energy acquiring activity is an important component of rickettsial parasitism. The polypeptide is ADP,ATP carrier protein 1 (tlcA) (Rickettsia prowazekii (strain Madrid E)).